A 445-amino-acid polypeptide reads, in one-letter code: tRNA-2-methylthio-N(6)-dimethylallyladenosine synthase (445 aa).

Residues 9 to 125 enclose the MTTase N-terminal domain; the sequence is LKYRILTYGC…LPYLIARAKE (117 aa). Residues Cys-18, Cys-54, Cys-88, Cys-162, Cys-166, and Cys-169 each contribute to the [4Fe-4S] cluster site. One can recognise a Radical SAM core domain in the interval 148–378; that stretch reads RKPGLSAFVN…NRRQYQIATE (231 aa). The TRAM domain occupies 381-444; sequence QELQGSIQEV…TFSLFGEIFN (64 aa).

This sequence belongs to the methylthiotransferase family. MiaB subfamily. Monomer. It depends on [4Fe-4S] cluster as a cofactor.

It is found in the cytoplasm. It catalyses the reaction N(6)-dimethylallyladenosine(37) in tRNA + (sulfur carrier)-SH + AH2 + 2 S-adenosyl-L-methionine = 2-methylsulfanyl-N(6)-dimethylallyladenosine(37) in tRNA + (sulfur carrier)-H + 5'-deoxyadenosine + L-methionine + A + S-adenosyl-L-homocysteine + 2 H(+). In terms of biological role, catalyzes the methylthiolation of N6-(dimethylallyl)adenosine (i(6)A), leading to the formation of 2-methylthio-N6-(dimethylallyl)adenosine (ms(2)i(6)A) at position 37 in tRNAs that read codons beginning with uridine. The sequence is that of tRNA-2-methylthio-N(6)-dimethylallyladenosine synthase from Syntrophomonas wolfei subsp. wolfei (strain DSM 2245B / Goettingen).